The primary structure comprises 210 residues: Somatotropin-2 (210 aa).

The N-terminal stretch at 1–22 is a signal peptide; it reads MGQVFLLMPVLLVSCFLSQGAA. Zn(2+) is bound at residue H38. A disulfide bridge links C71 with C183. E192 contacts Zn(2+). C200 and C208 form a disulfide bridge.

This sequence belongs to the somatotropin/prolactin family.

Its subcellular location is the secreted. Growth hormone plays an important role in growth control and is involved in the regulation of several anabolic processes. Implicated as an osmoregulatory substance important for seawater adaptation. In Oncorhynchus nerka (Sockeye salmon), this protein is Somatotropin-2 (gh2).